The sequence spans 234 residues: Triosephosphate isomerase (234 aa).

8–10 (NFK) lines the substrate pocket. His-90 (electrophile) is an active-site residue. The Proton acceptor role is filled by Glu-159. Residues Gly-165 and Ser-197 each coordinate substrate.

Belongs to the triosephosphate isomerase family. In terms of assembly, homodimer.

It is found in the cytoplasm. It catalyses the reaction D-glyceraldehyde 3-phosphate = dihydroxyacetone phosphate. Its pathway is carbohydrate biosynthesis; gluconeogenesis. It participates in carbohydrate degradation; glycolysis; D-glyceraldehyde 3-phosphate from glycerone phosphate: step 1/1. Its function is as follows. Involved in the gluconeogenesis. Catalyzes stereospecifically the conversion of dihydroxyacetone phosphate (DHAP) to D-glyceraldehyde-3-phosphate (G3P). The polypeptide is Triosephosphate isomerase (Helicobacter pylori (strain Shi470)).